The primary structure comprises 122 residues: Probable DNA-directed RNA polymerase II subunit RPB11 (122 aa).

Belongs to the archaeal Rpo11/eukaryotic RPB11/RPC19 RNA polymerase subunit family. Component of the RNA polymerase II (Pol II) complex consisting of 12 subunits.

It localises to the nucleus. DNA-dependent RNA polymerase catalyzes the transcription of DNA into RNA using the four ribonucleoside triphosphates as substrates. Component of RNA polymerase II which synthesizes mRNA precursors and many functional non-coding RNAs. Pol II is the central component of the basal RNA polymerase II transcription machinery. It is composed of mobile elements that move relative to each other. RPB11 is part of the core element with the central large cleft. The polypeptide is Probable DNA-directed RNA polymerase II subunit RPB11 (rpb-11) (Caenorhabditis elegans).